The chain runs to 850 residues: Protein SEY1 (850 aa).

The tract at residues 1–27 (MSDLPPPDLGSEEISVSPTSSSSSFVP) is disordered. Residues 1–741 (MSDLPPPDLG…KRALIQHVTH (741 aa)) are Cytoplasmic-facing. The span at 12-27 (EEISVSPTSSSSSFVP) shows a compositional bias: low complexity. One can recognise a GB1/RHD3-type G domain in the interval 64 to 297 (NNNYHIVSVF…NEDFLFKKYY (234 aa)). Residue 74-81 (GSQSTGKS) participates in GTP binding. The chain crosses the membrane as a helical span at residues 742–762 (IPYYIYIVILVLGWNEFMAVL). Residues 763–765 (RNP) lie on the Lumenal side of the membrane. Residues 766 to 786 (FFFTLLLMLGAGTYVLYHLNL) traverse the membrane as a helical segment. At 787 to 850 (LKPAMVVVQR…SDLTPPGEGS (64 aa)) the chain is on the cytoplasmic side. Residues 816 to 850 (QPQEHAKRLSKMAGITEDKPEEIEMSDLTPPGEGS) are disordered.

It belongs to the TRAFAC class dynamin-like GTPase superfamily. GB1/RHD3 GTPase family. RHD3 subfamily.

It is found in the endoplasmic reticulum membrane. In terms of biological role, cooperates with the reticulon proteins and tubule-shaping DP1 family proteins to generate and maintain the structure of the tubular endoplasmic reticulum network. Has GTPase activity, which is required for its function in ER organization. The sequence is that of Protein SEY1 from Meyerozyma guilliermondii (strain ATCC 6260 / CBS 566 / DSM 6381 / JCM 1539 / NBRC 10279 / NRRL Y-324) (Yeast).